The sequence spans 148 residues: Histone H2B.1 (148 aa).

Over residues 1 to 35 (MAPRAEKKPAEKKTAAERPVEENKAAEKAPAEKKP) the composition is skewed to basic and acidic residues. The tract at residues 1–56 (MAPRAEKKPAEKKTAAERPVEENKAAEKAPAEKKPKAGKKLPPKEAGDKKKKRSKK) is disordered. A N,N,N-trimethylalanine; alternate modification is found at Ala2. Ala2 bears the N,N-dimethylalanine; alternate mark. An N-methylalanine; alternate modification is found at Ala2. At Lys7 the chain carries N6-acetyllysine; partial. Lys12 is subject to N6-acetyllysine. Lys13 is subject to N6,N6-dimethyllysine. 3 positions are modified to N6-acetyllysine: Lys28, Lys33, and Lys39. Lys40 is modified (N6-acetyllysine; partial). Lys144 participates in a covalent cross-link: Glycyl lysine isopeptide (Lys-Gly) (interchain with G-Cter in ubiquitin).

Belongs to the histone H2B family. In terms of assembly, the nucleosome is a histone octamer containing two molecules each of H2A, H2B, H3 and H4 assembled in one H3-H4 heterotetramer and two H2A-H2B heterodimers. The octamer wraps approximately 147 bp of DNA. Interacts with AHL27. In terms of processing, can be acetylated to form H2BK6ac, H2BK33ac and H2BK34ac. Mono-, di- or trimethylated at the N-terminus to form H2BA1me1/2/3. H2BA1me2 may be acetylated to form H2BA1me2K6ac. Post-translationally, monoubiquitinated by BRE1 to form H2BK143ub1 and deubiquitinated by UBP26. Required for heterochromatic histone H3 di- and trimethylation at H3K4me. May give a specific tag for epigenetic transcriptional activation.

The protein localises to the nucleus. The protein resides in the chromosome. Core component of nucleosome. Nucleosomes wrap and compact DNA into chromatin, limiting DNA accessibility to the cellular machineries which require DNA as a template. Histones thereby play a central role in transcription regulation, DNA repair, DNA replication and chromosomal stability. DNA accessibility is regulated via a complex set of post-translational modifications of histones, also called histone code, and nucleosome remodeling. The sequence is that of Histone H2B.1 from Arabidopsis thaliana (Mouse-ear cress).